The following is a 257-amino-acid chain: Probable amino-acid ABC transporter-binding protein HI_1080 (257 aa).

Positions methionine 1–alanine 23 are cleaved as a signal peptide.

Belongs to the bacterial solute-binding protein 3 family.

The protein localises to the periplasm. Probably part of a binding-protein-dependent transport system for an amino acid. The sequence is that of Probable amino-acid ABC transporter-binding protein HI_1080 from Haemophilus influenzae (strain ATCC 51907 / DSM 11121 / KW20 / Rd).